Consider the following 555-residue polypeptide: MALNIADLVEHAIDLVPERVALASDGREVTYAQLEERANRLAHYLREQGVEPGDKVGIYSRNTIEAVEAMIAVFKIRAIMINVNYRYVENELQYIFDNSDMVALIHERRYSDKVANVLPSTPLVKTVVVVEDGTDVDFSAYGGIEYEAALAQSSPERDFEDRSADDIYILYTGGTTGHPKGVMWRHEDVWRVLGGGINFMTGEWVKDEWQLAKEGAENPGLVRYPIPPMIHGGAQWALFQSLFSGGKVIMHPEFSGHEVWRIIDDHKVNVIFITGDAMARPMLDALEEGNPKTGKPYDLSTLFAMASSAALFSPSIKDRFLDLLPGKIITDSIGSSETGFGGIGIAEKGKTLGGGPTVKIDESTTVLDDDGNPIEPGSGKVGMVARTGNIPLGYYKDEAKTKATFREYNGIRYSIPGDYARVEADGTVTMLGRGSVSINSGGEKVYPEEVEGALKQHPAVFDALVVGVPDERFGERVSAVVALRDGEQVTLDELMTTARSKIAGYKVPRAVWFVDEIKRSPAGKPDYRWAKDQTGLRPADEVYNNGDGNGAAATG.

ATP-binding positions include 172–180, aspartate 418, arginine 433, and lysine 524; that span reads TGGTTGHPK. The segment at 525–555 is disordered; the sequence is PDYRWAKDQTGLRPADEVYNNGDGNGAAATG. The segment covering 544-555 has biased composition (low complexity); the sequence is NNGDGNGAAATG.

This sequence belongs to the ATP-dependent AMP-binding enzyme family.

It carries out the reaction (25S)-3-oxocholest-4-en-26-oate + ATP + CoA = (25S)-3-oxocholest-4-en-26-oyl-CoA + AMP + diphosphate. It functions in the pathway steroid metabolism; cholesterol metabolism. Its function is as follows. Involved in the degradation of the side chains of C-24 branched-chain sterols. Catalyzes the ATP-dependent CoA thioesterification of the sterol 3-oxocholest-4-en-26-oate to yield 3-oxocholest-4-en-26-oyl-CoA. It can also use beta-sitosterol, campesterol and 3beta-hydroxy-5-cholesten-26-oate. The chain is 3-oxocholest-4-en-26-oate--CoA ligase from Rhodococcus rhodochrous.